The chain runs to 269 residues: Lysyl endopeptidase (269 aa).

3 disulfide bridges follow: Cys6-Cys216, Cys12-Cys80, and Cys36-Cys58. Catalysis depends on charge relay system residues His57, Asp113, and Ser194.

This sequence belongs to the peptidase S1 family.

It is found in the secreted. It catalyses the reaction Preferential cleavage: Lys-|-Xaa, including Lys-|-Pro.. Its function is as follows. Highly specific endopeptidase that hydrolyzes lysyl bonds including the Lys-Pro bond. The chain is Lysyl endopeptidase from Lysobacter enzymogenes.